We begin with the raw amino-acid sequence, 184 residues long: CASP-like protein 1U1 (184 aa).

The Cytoplasmic segment spans residues 1 to 30; sequence MSSTGTTLSASEGDKGFRNGAAPAKSKSHS. The helical transmembrane segment at 31–51 threads the bilayer; the sequence is TIALLRLLAFAATLSAFVTMI. The Extracellular segment spans residues 52–76; the sequence is TNKQKITIGPFTRWSKWHYSDAFMW. The helical transmembrane segment at 77–97 threads the bilayer; that stretch reads FVVANCIAFIYLLFAAILGLI. Residues 98 to 111 lie on the Cytoplasmic side of the membrane; the sequence is SHSPMLVKHLVILD. The chain crosses the membrane as a helical span at residues 112-132; it reads LIVSYMLFSAASAATAVAYIG. Residues 133–154 lie on the Extracellular side of the membrane; that stretch reads KNGISQPGWTAICGVFERYCHH. A helical membrane pass occupies residues 155–175; that stretch reads VAGALVACFLGWLFLTIAVFL. Residues 176-184 lie on the Cytoplasmic side of the membrane; sequence GMRRSPAAV.

It belongs to the Casparian strip membrane proteins (CASP) family. In terms of assembly, homodimer and heterodimers.

The protein resides in the cell membrane. This is CASP-like protein 1U1 from Marchantia polymorpha (Common liverwort).